A 418-amino-acid chain; its full sequence is AA14 family lytic polysaccharide monooxygenase B (418 aa).

The first 18 residues, 1–18, serve as a signal peptide directing secretion; it reads MIPVFLAAVAAFLPLTSG. Asparagine 31, asparagine 94, and asparagine 151 each carry an N-linked (GlcNAc...) asparagine glycan. Cystine bridges form between cysteine 85–cysteine 108, cysteine 127–cysteine 154, cysteine 171–cysteine 176, and cysteine 178–cysteine 200. Asparagine 201 and asparagine 235 each carry an N-linked (GlcNAc...) asparagine glycan. A disulfide bridge links cysteine 220 with cysteine 236. The segment covering 307–343 has biased composition (low complexity); the sequence is AAATPAPSSSGSSPSSSSPGSSSTASTTSTSGPRPSA. The tract at residues 307–364 is disordered; that stretch reads AAATPAPSSSGSSPSSSSPGSSSTASTTSTSGPRPSARGFRRSTGERPPTGVPTPRKS.

It belongs to the polysaccharide monooxygenase AA14 family. It depends on Cu(2+) as a cofactor.

The protein resides in the secreted. Its function is as follows. Lytic polysaccharide monooxygenase (LPMO) that oxidatively cleaves xylan with both C1 and C4 regioselectivity and that specifically targets the protective shield made by heteroxylans that cover cellulose microfibrils in wood. Catalysis by LPMOs requires the reduction of the active-site copper from Cu(II) to Cu(I) by a reducing agent and H(2)O(2) or O(2) as a cosubstrate. Cleavage occurs only when xylans are bound to cellulose and not when they are in solution. Increases the efficiency of wood saccharification through oxidative cleavage of highly refractory xylan-coated cellulose fibers via synergistic relationship with xylan-active enzymes, xylobiohydrolases and cellobiohydrolases. The protein is AA14 family lytic polysaccharide monooxygenase B of Trametes coccinea (strain BRFM310) (Pycnoporus coccineus).